A 156-amino-acid chain; its full sequence is Small ribosomal subunit protein uS7 (156 aa).

The protein belongs to the universal ribosomal protein uS7 family. As to quaternary structure, part of the 30S ribosomal subunit. Contacts proteins S9 and S11.

Functionally, one of the primary rRNA binding proteins, it binds directly to 16S rRNA where it nucleates assembly of the head domain of the 30S subunit. Is located at the subunit interface close to the decoding center, probably blocks exit of the E-site tRNA. The protein is Small ribosomal subunit protein uS7 of Brachyspira hyodysenteriae (strain ATCC 49526 / WA1).